We begin with the raw amino-acid sequence, 211 residues long: Nucleoside triphosphate pyrophosphatase (211 aa).

D76 functions as the Proton acceptor in the catalytic mechanism.

This sequence belongs to the Maf family. The cofactor is a divalent metal cation.

Its subcellular location is the cytoplasm. It carries out the reaction a ribonucleoside 5'-triphosphate + H2O = a ribonucleoside 5'-phosphate + diphosphate + H(+). The catalysed reaction is a 2'-deoxyribonucleoside 5'-triphosphate + H2O = a 2'-deoxyribonucleoside 5'-phosphate + diphosphate + H(+). Functionally, nucleoside triphosphate pyrophosphatase. May have a dual role in cell division arrest and in preventing the incorporation of modified nucleotides into cellular nucleic acids. The sequence is that of Nucleoside triphosphate pyrophosphatase from Saccharopolyspora erythraea (strain ATCC 11635 / DSM 40517 / JCM 4748 / NBRC 13426 / NCIMB 8594 / NRRL 2338).